The sequence spans 332 residues: Glycerol-3-phosphate dehydrogenase [NAD(P)+] (332 aa).

Serine 10, tryptophan 11, lysine 31, and lysine 105 together coordinate NADPH. The sn-glycerol 3-phosphate site is built by lysine 105, glycine 136, and serine 138. Residue alanine 140 participates in NADPH binding. Sn-glycerol 3-phosphate-binding residues include lysine 191, aspartate 244, serine 254, arginine 255, and asparagine 256. The active-site Proton acceptor is the lysine 191. Residue arginine 255 coordinates NADPH. Valine 279 and glutamate 281 together coordinate NADPH.

It belongs to the NAD-dependent glycerol-3-phosphate dehydrogenase family.

It is found in the cytoplasm. The enzyme catalyses sn-glycerol 3-phosphate + NAD(+) = dihydroxyacetone phosphate + NADH + H(+). It catalyses the reaction sn-glycerol 3-phosphate + NADP(+) = dihydroxyacetone phosphate + NADPH + H(+). Its pathway is membrane lipid metabolism; glycerophospholipid metabolism. Functionally, catalyzes the reduction of the glycolytic intermediate dihydroxyacetone phosphate (DHAP) to sn-glycerol 3-phosphate (G3P), the key precursor for phospholipid synthesis. The sequence is that of Glycerol-3-phosphate dehydrogenase [NAD(P)+] from Anaeromyxobacter sp. (strain K).